We begin with the raw amino-acid sequence, 234 residues long: Large ribosomal subunit protein uL1 (234 aa).

It belongs to the universal ribosomal protein uL1 family. Part of the 50S ribosomal subunit.

In terms of biological role, binds directly to 23S rRNA. The L1 stalk is quite mobile in the ribosome, and is involved in E site tRNA release. Functionally, protein L1 is also a translational repressor protein, it controls the translation of the L11 operon by binding to its mRNA. The chain is Large ribosomal subunit protein uL1 from Salmonella agona (strain SL483).